The primary structure comprises 104 residues: L-rhamnose mutarotase (104 aa).

Tyr-18 contributes to the substrate binding site. His-22 functions as the Proton donor in the catalytic mechanism. Substrate is bound by residues Tyr-41 and 76–77; that span reads WW.

This sequence belongs to the rhamnose mutarotase family. As to quaternary structure, homodimer.

It localises to the cytoplasm. It carries out the reaction alpha-L-rhamnose = beta-L-rhamnose. It participates in carbohydrate metabolism; L-rhamnose metabolism. Involved in the anomeric conversion of L-rhamnose. This Burkholderia ambifaria (strain ATCC BAA-244 / DSM 16087 / CCUG 44356 / LMG 19182 / AMMD) (Burkholderia cepacia (strain AMMD)) protein is L-rhamnose mutarotase.